The chain runs to 101 residues: Small ribosomal subunit protein uS10 (101 aa).

The protein belongs to the universal ribosomal protein uS10 family. In terms of assembly, part of the 30S ribosomal subunit.

Functionally, involved in the binding of tRNA to the ribosomes. This is Small ribosomal subunit protein uS10 from Corynebacterium jeikeium (strain K411).